The primary structure comprises 139 residues: Prefoldin subunit alpha (139 aa).

It belongs to the prefoldin subunit alpha family. Heterohexamer of two alpha and four beta subunits.

It localises to the cytoplasm. Molecular chaperone capable of stabilizing a range of proteins. Seems to fulfill an ATP-independent, HSP70-like function in archaeal de novo protein folding. In Picrophilus torridus (strain ATCC 700027 / DSM 9790 / JCM 10055 / NBRC 100828 / KAW 2/3), this protein is Prefoldin subunit alpha.